Reading from the N-terminus, the 614-residue chain is DNA repair protein rad26 (614 aa).

Low complexity predominate over residues 29–43; sequence QAQTQVQAQSSQVVV. Disordered stretches follow at residues 29–76 and 157–214; these read QAQT…QASL and KKMK…TAED. Polar residues-rich tracts occupy residues 50–76 and 181–190; these read QNLN…QASL and LLSSSDQLAK. Residues 191-207 are compositionally biased toward basic residues; sequence STKHAAKNSPSKKKRKT.

As to quaternary structure, interacts with cds1.

The protein localises to the nucleus. Its function is as follows. Involved in cell cycle arrest when DNA synthesis is inhibited by hydroxyurea, and in mitosis arrest after treatment with DNA-damaging agents. This protein is S phase-specific. This Schizosaccharomyces pombe (strain 972 / ATCC 24843) (Fission yeast) protein is DNA repair protein rad26 (rad26).